The following is a 73-amino-acid chain: Methionyl-tRNA formyltransferase (73 aa).

It belongs to the Fmt family.

It catalyses the reaction L-methionyl-tRNA(fMet) + (6R)-10-formyltetrahydrofolate = N-formyl-L-methionyl-tRNA(fMet) + (6S)-5,6,7,8-tetrahydrofolate + H(+). Attaches a formyl group to the free amino group of methionyl-tRNA(fMet). The formyl group appears to play a dual role in the initiator identity of N-formylmethionyl-tRNA by promoting its recognition by IF2 and preventing the misappropriation of this tRNA by the elongation apparatus. The polypeptide is Methionyl-tRNA formyltransferase (fmt) (Rickettsia akari).